We begin with the raw amino-acid sequence, 106 residues long: Large ribosomal subunit protein uL22 (106 aa).

The protein belongs to the universal ribosomal protein uL22 family. In terms of assembly, part of the 50S ribosomal subunit.

Its function is as follows. This protein binds specifically to 23S rRNA; its binding is stimulated by other ribosomal proteins, e.g. L4, L17, and L20. It is important during the early stages of 50S assembly. It makes multiple contacts with different domains of the 23S rRNA in the assembled 50S subunit and ribosome. In terms of biological role, the globular domain of the protein is located near the polypeptide exit tunnel on the outside of the subunit, while an extended beta-hairpin is found that lines the wall of the exit tunnel in the center of the 70S ribosome. This is Large ribosomal subunit protein uL22 from Nautilia profundicola (strain ATCC BAA-1463 / DSM 18972 / AmH).